Consider the following 530-residue polypeptide: CTP synthase (530 aa).

An amidoligase domain region spans residues 1–264 (MPKLIIVTGG…GDFLTRRLRL (264 aa)). Position 13 (serine 13) interacts with CTP. Serine 13 lines the UTP pocket. 14–19 (GVGKGV) contacts ATP. Tyrosine 54 is a binding site for L-glutamine. Aspartate 71 provides a ligand contact to ATP. Mg(2+)-binding residues include aspartate 71 and glutamate 139. Residues 146-148 (DYE), 185-190 (KTKPLQ), and lysine 221 contribute to the CTP site. Residues 185–190 (KTKPLQ) and lysine 221 contribute to the UTP site. One can recognise a Glutamine amidotransferase type-1 domain in the interval 289-530 (SVGMCGKYVE…LLKAALFAKR (242 aa)). An L-glutamine-binding site is contributed by glycine 351. Cysteine 378 functions as the Nucleophile; for glutamine hydrolysis in the catalytic mechanism. L-glutamine is bound by residues 379-382 (FGMQ), glutamate 402, and arginine 459. Catalysis depends on residues histidine 504 and glutamate 506.

The protein belongs to the CTP synthase family. Homotetramer.

The catalysed reaction is UTP + L-glutamine + ATP + H2O = CTP + L-glutamate + ADP + phosphate + 2 H(+). It carries out the reaction L-glutamine + H2O = L-glutamate + NH4(+). The enzyme catalyses UTP + NH4(+) + ATP = CTP + ADP + phosphate + 2 H(+). It functions in the pathway pyrimidine metabolism; CTP biosynthesis via de novo pathway; CTP from UDP: step 2/2. With respect to regulation, allosterically activated by GTP, when glutamine is the substrate; GTP has no effect on the reaction when ammonia is the substrate. The allosteric effector GTP functions by stabilizing the protein conformation that binds the tetrahedral intermediate(s) formed during glutamine hydrolysis. Inhibited by the product CTP, via allosteric rather than competitive inhibition. Its function is as follows. Catalyzes the ATP-dependent amination of UTP to CTP with either L-glutamine or ammonia as the source of nitrogen. Regulates intracellular CTP levels through interactions with the four ribonucleotide triphosphates. The protein is CTP synthase of Pyrobaculum aerophilum (strain ATCC 51768 / DSM 7523 / JCM 9630 / CIP 104966 / NBRC 100827 / IM2).